The primary structure comprises 476 residues: MKPTLPNYDQSGVLIVGDVMLDRYWVGPTSRISPEAPVPVVKVENNEERPGGAANVAMNVAALGGQAHLVGLVGEDEPAQALTTTLESLKVHCDFVALPNFPTITKLRVMSRGQQLIRLDFEESFHDIPAEPIISRMQATLPKVKAVVLSDYAKGALEHVQLMIQEARKAGVPVFIDPKGADFERYRGATLLTPNMLEFETVVGKVKDEEDLVVKGQQIIEEFDFEALLVTRSEHGMTLLRSDMAPLHLPTQAREVFDVTGAGDTVISVLAASVSTGKPLDEACALANAAAGVVVGKLGTSTLSTIELAEAIHGSQDSGFGIINEELLISAVKQARERGEKVVMTNGCFDILHAGHVYYLNHAAELGDRLIVAVNTNESVQRLKGPGRPINPTDRRMAVLAGLGAVDWVVPFSEDTPQRLISEVLPTLLVKGGDYEIKDIAGGAEVIAAGGEVKVLNFEDGCSTTGIIEAIKGGRG.

Residues 1-318 (MKPTLPNYDQ…AEAIHGSQDS (318 aa)) are ribokinase. 195–198 (NMLE) serves as a coordination point for ATP. D264 is an active-site residue. The tract at residues 344–476 (MTNGCFDILH…IIEAIKGGRG (133 aa)) is cytidylyltransferase.

The protein in the N-terminal section; belongs to the carbohydrate kinase PfkB family. This sequence in the C-terminal section; belongs to the cytidylyltransferase family. As to quaternary structure, homodimer.

It carries out the reaction D-glycero-beta-D-manno-heptose 7-phosphate + ATP = D-glycero-beta-D-manno-heptose 1,7-bisphosphate + ADP + H(+). The catalysed reaction is D-glycero-beta-D-manno-heptose 1-phosphate + ATP + H(+) = ADP-D-glycero-beta-D-manno-heptose + diphosphate. The protein operates within nucleotide-sugar biosynthesis; ADP-L-glycero-beta-D-manno-heptose biosynthesis; ADP-L-glycero-beta-D-manno-heptose from D-glycero-beta-D-manno-heptose 7-phosphate: step 1/4. It functions in the pathway nucleotide-sugar biosynthesis; ADP-L-glycero-beta-D-manno-heptose biosynthesis; ADP-L-glycero-beta-D-manno-heptose from D-glycero-beta-D-manno-heptose 7-phosphate: step 3/4. Its function is as follows. Catalyzes the phosphorylation of D-glycero-D-manno-heptose 7-phosphate at the C-1 position to selectively form D-glycero-beta-D-manno-heptose-1,7-bisphosphate. Catalyzes the ADP transfer from ATP to D-glycero-beta-D-manno-heptose 1-phosphate, yielding ADP-D-glycero-beta-D-manno-heptose. The sequence is that of Bifunctional protein HldE from Aliivibrio salmonicida (strain LFI1238) (Vibrio salmonicida (strain LFI1238)).